We begin with the raw amino-acid sequence, 1411 residues long: Early endosome antigen 1 (1411 aa).

The tract at residues 1 to 27 is disordered; that stretch reads MFRRILQRTPGRVGSQGSDLDSSATPI. Positions 15–27 are enriched in polar residues; that stretch reads SQGSDLDSSATPI. The C2H2-type zinc finger occupies 41–64; sequence FICPQCMKSLGSADELFKHYQAVH. Residues Ser52 and Ser70 each carry the phosphoserine modification. Residues 78–1348 are a coiled coil; the sequence is LALTRDDITL…IKHTQALNRK (1271 aa). Disordered stretches follow at residues 476–501 and 1189–1217; these read STEL…QSAT and EKES…KEAK. A compositionally biased stretch (basic and acidic residues) spans 481 to 490; that stretch reads HQLEKSKQQH. The segment covering 491–500 has biased composition (low complexity); it reads QEQQALQQSA. The segment at 1352–1410 adopts an FYVE-type zinc-finger fold; sequence DNEVQNCMSCGKCFSVTVRRHHCRQCGNIFCAECSTKNALTPSSKKPVRVCDACFNDLQ. Positions 1358, 1361, 1374, 1377, 1382, 1385, 1402, and 1405 each coordinate Zn(2+).

As to quaternary structure, homodimer. Binds STX6. Binds RAB5A, RAB5B, RAB5C and RAB22A that have been activated by GTP-binding. Interacts with ERBB2. Interacts with RAB31. Interacts with SAMD9 and SAMD9L. May interact with PLEKHF2.

It localises to the cytoplasm. The protein localises to the early endosome membrane. Functionally, binds phospholipid vesicles containing phosphatidylinositol 3-phosphate and participates in endosomal trafficking. In Mus musculus (Mouse), this protein is Early endosome antigen 1 (Eea1).